Here is a 136-residue protein sequence, read N- to C-terminus: Protein NrdI (136 aa).

The protein belongs to the NrdI family.

Functionally, probably involved in ribonucleotide reductase function. The protein is Protein NrdI of Enterobacter sp. (strain 638).